We begin with the raw amino-acid sequence, 260 residues long: MALRRPMVAGNWKMNGSAALAQELFKKFASKLQNDSAEVVLCPPSIYLESVRQLLEANKEALDGSLVRMGAQNLSQHDFGAYTGEVSGQMLKDSGCRYVIIGHSERRRMYGETSNIVAEKFAAAQKHGLTPILCVGESGPAREARRTFEVIAEELDIVIQKNGTMAFDNAIIAYEPLWAVGTGKSATPEQAQEVHAFIRKRLSEVSPFIGENIRILYGGSVTPSNAADLFAQPDVDGGLIGGASLNSSEFLSLCTIAMSA.

11 to 13 (NWK) contacts substrate. His-103 (electrophile) is an active-site residue. Glu-175 acts as the Proton acceptor in catalysis. Substrate contacts are provided by residues Gly-181, Ser-220, and 241 to 242 (GG).

This sequence belongs to the triosephosphate isomerase family. In terms of assembly, homodimer.

It localises to the cytoplasm. The enzyme catalyses D-glyceraldehyde 3-phosphate = dihydroxyacetone phosphate. Its pathway is carbohydrate biosynthesis; gluconeogenesis. It participates in carbohydrate degradation; glycolysis; D-glyceraldehyde 3-phosphate from glycerone phosphate: step 1/1. Involved in the gluconeogenesis. Catalyzes stereospecifically the conversion of dihydroxyacetone phosphate (DHAP) to D-glyceraldehyde-3-phosphate (G3P). This Shewanella sp. (strain W3-18-1) protein is Triosephosphate isomerase.